A 292-amino-acid chain; its full sequence is Protoheme IX farnesyltransferase (292 aa).

9 helical membrane passes run 13-33 (ILFGNFITTLGGFFLAAQGHV), 35-55 (FLLLILTLLGTTFVVASGCVV), 84-104 (TALIFAFILGIIGFGILWFWV), 106-126 (PYSFSFAIIGFVVYVGFYSLW), 135-155 (TIIGSISGASPPVIGYTAVTH), 161-181 (ALLIFLAYGLWQMPHSWAIAI), 206-226 (VECLIYIVLFAAVLNGLYCFG), 231-251 (FFLLTFNVLTAYWLYLSIIGF), and 263-283 (LFLFSVILITLLSLSFSFTYQ).

This sequence belongs to the UbiA prenyltransferase family. Protoheme IX farnesyltransferase subfamily.

It localises to the cell inner membrane. It carries out the reaction heme b + (2E,6E)-farnesyl diphosphate + H2O = Fe(II)-heme o + diphosphate. The protein operates within porphyrin-containing compound metabolism; heme O biosynthesis; heme O from protoheme: step 1/1. Converts heme B (protoheme IX) to heme O by substitution of the vinyl group on carbon 2 of heme B porphyrin ring with a hydroxyethyl farnesyl side group. This chain is Protoheme IX farnesyltransferase, found in Acinetobacter baylyi (strain ATCC 33305 / BD413 / ADP1).